The chain runs to 422 residues: Histidine--tRNA ligase (422 aa).

Belongs to the class-II aminoacyl-tRNA synthetase family. As to quaternary structure, homodimer.

The protein localises to the cytoplasm. It carries out the reaction tRNA(His) + L-histidine + ATP = L-histidyl-tRNA(His) + AMP + diphosphate + H(+). The sequence is that of Histidine--tRNA ligase from Ruthia magnifica subsp. Calyptogena magnifica.